Reading from the N-terminus, the 95-residue chain is Protein TusB (95 aa).

It belongs to the DsrH/TusB family. As to quaternary structure, heterohexamer, formed by a dimer of trimers. The hexameric TusBCD complex contains 2 copies each of TusB, TusC and TusD. The TusBCD complex interacts with TusE.

The protein localises to the cytoplasm. Its function is as follows. Part of a sulfur-relay system required for 2-thiolation of 5-methylaminomethyl-2-thiouridine (mnm(5)s(2)U) at tRNA wobble positions. This is Protein TusB from Photorhabdus laumondii subsp. laumondii (strain DSM 15139 / CIP 105565 / TT01) (Photorhabdus luminescens subsp. laumondii).